The following is a 360-amino-acid chain: Geranylgeranyl pyrophosphate synthase 9, chloroplastic (360 aa).

The transit peptide at 1–39 (MATTVHLSSSSLFSQSRGRRDNSISSVKSLRKRTVLSLS) directs the protein to the chloroplast. Positions 106, 109, and 138 each coordinate isopentenyl diphosphate. The Mg(2+) site is built by D145 and D151. R156 provides a ligand contact to dimethylallyl diphosphate. R157 serves as a coordination point for isopentenyl diphosphate. Dimethylallyl diphosphate is bound by residues K245, T246, Q283, K300, and K310.

This sequence belongs to the FPP/GGPP synthase family. Monomer. No interactions with GGR. Mg(2+) is required as a cofactor.

The protein localises to the plastid. Its subcellular location is the chloroplast. It catalyses the reaction isopentenyl diphosphate + dimethylallyl diphosphate = (2E)-geranyl diphosphate + diphosphate. The catalysed reaction is isopentenyl diphosphate + (2E)-geranyl diphosphate = (2E,6E)-farnesyl diphosphate + diphosphate. The enzyme catalyses isopentenyl diphosphate + (2E,6E)-farnesyl diphosphate = (2E,6E,10E)-geranylgeranyl diphosphate + diphosphate. Its pathway is isoprenoid biosynthesis; farnesyl diphosphate biosynthesis; farnesyl diphosphate from geranyl diphosphate and isopentenyl diphosphate: step 1/1. The protein operates within isoprenoid biosynthesis; geranyl diphosphate biosynthesis; geranyl diphosphate from dimethylallyl diphosphate and isopentenyl diphosphate: step 1/1. It participates in isoprenoid biosynthesis; geranylgeranyl diphosphate biosynthesis; geranylgeranyl diphosphate from farnesyl diphosphate and isopentenyl diphosphate: step 1/1. Functionally, catalyzes the trans-addition of the three molecules of IPP onto DMAPP to form geranylgeranyl pyrophosphate. The polypeptide is Geranylgeranyl pyrophosphate synthase 9, chloroplastic (GGPPS9) (Arabidopsis thaliana (Mouse-ear cress)).